The primary structure comprises 303 residues: Uricase (303 aa).

Residue Ala2 is modified to N-acetylalanine. N6-acetyllysine; alternate occurs at positions 10 and 23. An N6-succinyllysine; alternate mark is found at Lys10 and Lys23. Catalysis depends on Lys23, which acts as the Charge relay system. Residues Lys27 and Lys36 each carry the N6-acetyllysine modification. Phosphoserine is present on residues Ser39 and Ser63. The active-site Charge relay system is the Thr68. Residues Thr68 and Asp69 each contribute to the urate site. N6-acetyllysine occurs at positions 118, 122, and 164. A urate-binding site is contributed by Phe170. N6-acetyllysine occurs at positions 175 and 185. Urate is bound at residue Arg187. Lys220 is modified (N6-acetyllysine; alternate). Lys220 is modified (N6-succinyllysine; alternate). Ser231 is modified (phosphoserine). Urate-binding residues include Val234, Gln235, and Asn261. The active-site Charge relay system is the His263. Lys277 bears the N6-acetyllysine mark. Tyr288 carries the post-translational modification Phosphotyrosine. Residues 301 to 303 (SRL) carry the Microbody targeting signal motif.

Belongs to the uricase family. Expressed in liver. Not detected in other tissues tested.

Its subcellular location is the peroxisome. It catalyses the reaction urate + O2 + H2O = 5-hydroxyisourate + H2O2. The protein operates within purine metabolism; urate degradation; (S)-allantoin from urate: step 1/3. With respect to regulation, competitively inhibited by xanthine. Catalyzes the oxidation of uric acid to 5-hydroxyisourate, which is further processed to form (S)-allantoin. In Rattus norvegicus (Rat), this protein is Uricase (Uox).